Here is a 202-residue protein sequence, read N- to C-terminus: Small ribosomal subunit protein uS4 (202 aa).

The disordered stretch occupies residues 15 to 42 (LGDLPGLTRKAAKRSYPPGQHGQARRKR). Residues 90-152 (NRLDNVCFRL…KCSKQLAEGN (63 aa)) form the S4 RNA-binding domain.

The protein belongs to the universal ribosomal protein uS4 family. In terms of assembly, part of the 30S ribosomal subunit. Contacts protein S5. The interaction surface between S4 and S5 is involved in control of translational fidelity.

One of the primary rRNA binding proteins, it binds directly to 16S rRNA where it nucleates assembly of the body of the 30S subunit. Functionally, with S5 and S12 plays an important role in translational accuracy. This Synechococcus sp. (strain WH7803) protein is Small ribosomal subunit protein uS4.